The chain runs to 402 residues: Protein lag-2 (402 aa).

Residues 1–15 (MIAYFLLLLTCLPVL) form the signal peptide. The Extracellular portion of the chain corresponds to 16–279 (QARVEVHQEF…TTTTPTTVEI (264 aa)). Residues asparagine 72 and asparagine 105 are each glycosylated (N-linked (GlcNAc...) asparagine). The DSL domain occupies 122–166 (VTCARNYFGNRCENFCDAHLAKAARKRCDAMGRLRCDIGWMGPHC). Intrachain disulfides connect cysteine 124/cysteine 133, cysteine 137/cysteine 149, cysteine 157/cysteine 166, cysteine 175/cysteine 183, cysteine 177/cysteine 204, cysteine 206/cysteine 215, cysteine 233/cysteine 245, cysteine 239/cysteine 254, and cysteine 256/cysteine 265. 2 EGF-like domains span residues 171–216 (DPRK…TRCE) and 229–266 (RPDACSVKDACLNGAKCFPNGPKVFCSCAVGFIGEFCE). The N-linked (GlcNAc...) asparagine glycan is linked to asparagine 194. A helical transmembrane segment spans residues 280-306 (TVSTSGYSSAVYITVALFVIFSIIIGC). The Cytoplasmic portion of the chain corresponds to 307 to 402 (FKYKFKPMRQ…PPSIPACHYV (96 aa)).

May interact with lin-12 / Notch receptor. As to expression, expressed in the gonad distal tip cell (DTC) of hermaphrodites.

It is found in the cell membrane. Functionally, probable ligand for lin-12/Notch and glp-1/Notch receptors and involved in the mediation of Notch signaling. Involved in the lin-12/Notch pathway signaling of cell fate in vulval precursor cells (VPCs) and in the postembryonic mesodermal lineage (M lineage), acting redundantly with dsl-1 and apx-1. Functions in uterine cells to promote basement membrane mobility during tissue remodeling. Required for oocyte growth control, acting redundantly with apx-1, perhaps signaling via the glp-1/Notch pathway. Plays a role in Notch-dependent induction of left-right asymmetry in interneurons and motoneurons. Involved in maintaining the developmentally arrested larval state known as dauer, probably signaling in the glp-1/Notch pathway. Required for normal sleep bout quantity and arousal thresholds during the transition from the last larval stage to adulthood in well-fed animals. The protein is Protein lag-2 of Caenorhabditis elegans.